The following is a 210-amino-acid chain: N-(5'-phosphoribosyl)anthranilate isomerase (210 aa).

It belongs to the TrpF family.

It carries out the reaction N-(5-phospho-beta-D-ribosyl)anthranilate = 1-(2-carboxyphenylamino)-1-deoxy-D-ribulose 5-phosphate. It participates in amino-acid biosynthesis; L-tryptophan biosynthesis; L-tryptophan from chorismate: step 3/5. The protein is N-(5'-phosphoribosyl)anthranilate isomerase of Staphylococcus aureus (strain MRSA252).